The following is a 278-amino-acid chain: Anamorsin homolog (278 aa).

Residues 1–147 (MESVSHLVSN…EIGSSAALPF (147 aa)) are N-terminal SAM-like domain. Residues 147–191 (FANKISLGGNSKMETAKMWTLSSQDFVDDDIDIIDENTLIEEDDF) form a linker region. [2Fe-2S] cluster-binding residues include cysteine 204, cysteine 214, cysteine 217, and cysteine 219. Residues 204 to 219 (CDSAKKKRKACKNCSC) form a fe-S binding site A region. Positions 239, 242, 250, and 253 each coordinate [4Fe-4S] cluster. 2 short sequence motifs (cx2C motif) span residues 239–242 (CGSC) and 250–253 (CSSC). The segment at 239 to 253 (CGSCYLGDAFRCSSC) is fe-S binding site B.

This sequence belongs to the anamorsin family. Monomer. The cofactor is [2Fe-2S] cluster. [4Fe-4S] cluster serves as cofactor.

It localises to the cytoplasm. The protein localises to the mitochondrion intermembrane space. Its function is as follows. Component of the cytosolic iron-sulfur (Fe-S) protein assembly (CIA) machinery. Required for the maturation of extramitochondrial Fe-S proteins. Part of an electron transfer chain functioning in an early step of cytosolic Fe-S biogenesis, facilitating the de novo assembly of a [4Fe-4S] cluster on the cytosolic Fe-S scaffold complex. Electrons are transferred from NADPH via a FAD- and FMN-containing diflavin oxidoreductase. Together with the diflavin oxidoreductase, also required for the assembly of the diferric tyrosyl radical cofactor of ribonucleotide reductase (RNR), probably by providing electrons for reduction during radical cofactor maturation in the catalytic small subunit. The polypeptide is Anamorsin homolog (Trichoplax adhaerens (Trichoplax reptans)).